Here is a 622-residue protein sequence, read N- to C-terminus: Pentatricopeptide repeat-containing protein At5g06540 (622 aa).

PPR repeat units follow at residues 81–115 (NLFV…RIWP), 116–150 (DNIT…GFQN), 151–181 (DVYV…MGFR), 182–212 (DVVS…MPHR), 213–247 (NLFT…GVVA), 248–282 (NETV…HMTV), 283–313 (NLIL…LPET), 314–348 (DSLS…GFIP), 349–384 (RDVT…GIEP), and 385–419 (RLEH…PNAP). The tract at residues 420–495 (ILGALLGACK…PPGWSLIEID (76 aa)) is type E motif. Positions 496-527 (GKINKFTMGDDQKHPEMGKIRRKWEEILGKIR) are type E(+) motif. The interval 528 to 622 (LIGYKGNTGD…NGVCSCRDYW (95 aa)) is type DYW motif.

This sequence belongs to the PPR family. PCMP-H subfamily.

This is Pentatricopeptide repeat-containing protein At5g06540 (PCMP-H88) from Arabidopsis thaliana (Mouse-ear cress).